Here is a 555-residue protein sequence, read N- to C-terminus: CTP synthase (555 aa).

Residues 1–265 (MTRYIFITGG…GNRVCEKLNI (265 aa)) form an amidoligase domain region. A CTP-binding site is contributed by S13. S13 lines the UTP pocket. Residues 14 to 19 (SLGKGI) and D71 each bind ATP. 2 residues coordinate Mg(2+): D71 and E139. CTP is bound by residues 146 to 148 (DIE), 186 to 191 (KTKPTQ), and K222. UTP-binding positions include 186-191 (KTKPTQ) and K222. A Glutamine amidotransferase type-1 domain is found at 290 to 541 (TVAVVGKYVD…IKAGLAAKEA (252 aa)). An L-glutamine-binding site is contributed by G351. C378 serves as the catalytic Nucleophile; for glutamine hydrolysis. L-glutamine is bound by residues 379 to 382 (LGMQ), E402, and R469. Catalysis depends on residues H514 and E516.

It belongs to the CTP synthase family. As to quaternary structure, homotetramer.

The enzyme catalyses UTP + L-glutamine + ATP + H2O = CTP + L-glutamate + ADP + phosphate + 2 H(+). It catalyses the reaction L-glutamine + H2O = L-glutamate + NH4(+). The catalysed reaction is UTP + NH4(+) + ATP = CTP + ADP + phosphate + 2 H(+). Its pathway is pyrimidine metabolism; CTP biosynthesis via de novo pathway; CTP from UDP: step 2/2. Its activity is regulated as follows. Allosterically activated by GTP, when glutamine is the substrate; GTP has no effect on the reaction when ammonia is the substrate. The allosteric effector GTP functions by stabilizing the protein conformation that binds the tetrahedral intermediate(s) formed during glutamine hydrolysis. Inhibited by the product CTP, via allosteric rather than competitive inhibition. Its function is as follows. Catalyzes the ATP-dependent amination of UTP to CTP with either L-glutamine or ammonia as the source of nitrogen. Regulates intracellular CTP levels through interactions with the four ribonucleotide triphosphates. In Coxiella burnetii (strain Dugway 5J108-111), this protein is CTP synthase.